A 291-amino-acid polypeptide reads, in one-letter code: Halorhodopsin (291 aa).

The Extracellular portion of the chain corresponds to 1–30 (MTETLPPVTESAVALQAEVTQRELFEFVLN). Residues 31–56 (DPLLASSLYINIALAGLSILLFVFMT) form a helical membrane-spanning segment. The Cytoplasmic portion of the chain corresponds to 57-62 (RGLDDP). A helical transmembrane segment spans residues 63–86 (RAKLIAVSTILVPVVSIASYTGLA). The Extracellular portion of the chain corresponds to 87–120 (SGLTISVLEMPAGHFAEGSSVMLGGEEVDGVVTM). A helical transmembrane segment spans residues 121 to 142 (WGRYLTWALSTPMILLALGLLA). Residues 143–145 (GSN) lie on the Cytoplasmic side of the membrane. Residues 146-169 (ATKLFTAITFDIAMCVTGLAAALT) form a helical membrane-spanning segment. Topologically, residues 170–172 (TSS) are extracellular. Residues 173–195 (HLMRWFWYAISCACFLVVLYILL) traverse the membrane as a helical segment. Over 196–207 (VEWAQDAKAAGT) the chain is Cytoplasmic. The helical transmembrane segment at 208–231 (ADMFNTLKLLTVVMWLGYPIVWAL) threads the bilayer. The Extracellular portion of the chain corresponds to 232-240 (GVEGIAVLP). A helical transmembrane segment spans residues 241-269 (VGVTSWGYSFLDIVAKYIFAFLLLNYLTS). N6-(retinylidene)lysine is present on lysine 256. Residues 270 to 291 (NESVVSGSILDVPSASGTPADD) lie on the Cytoplasmic side of the membrane.

This sequence belongs to the archaeal/bacterial/fungal opsin family.

It localises to the cell membrane. In terms of biological role, light-driven anion pump. Binding affinity for the anions is in the order, bromide &gt; chloride &gt; nitrate &gt; azide &gt; bromate and binding is pH dependent. In Natronomonas pharaonis (Natronobacterium pharaonis), this protein is Halorhodopsin (hop).